Reading from the N-terminus, the 269-residue chain is Tryptophan synthase alpha chain (269 aa).

Residues glutamate 49 and aspartate 60 each act as proton acceptor in the active site.

The protein belongs to the TrpA family. In terms of assembly, tetramer of two alpha and two beta chains.

The enzyme catalyses (1S,2R)-1-C-(indol-3-yl)glycerol 3-phosphate + L-serine = D-glyceraldehyde 3-phosphate + L-tryptophan + H2O. The protein operates within amino-acid biosynthesis; L-tryptophan biosynthesis; L-tryptophan from chorismate: step 5/5. Its function is as follows. The alpha subunit is responsible for the aldol cleavage of indoleglycerol phosphate to indole and glyceraldehyde 3-phosphate. The polypeptide is Tryptophan synthase alpha chain (Buchnera aphidicola subsp. Acyrthosiphon pisum (strain APS) (Acyrthosiphon pisum symbiotic bacterium)).